The primary structure comprises 273 residues: Phosphatidylglycerol--prolipoprotein diacylglyceryl transferase (273 aa).

A run of 7 helical transmembrane segments spans residues 19 to 39 (VHWYGLMYLLAFLCAWGLASY), 55 to 75 (LVFYGALGVVLGGRVGYVLFY), 90 to 110 (VWTGGMSFHGGFIGVMLAMIL), 125 to 145 (FIAPCVPTGLMFGRIGNFIGA), 174 to 194 (PSQIYQAICEGLLLFILLWWF), 202 to 222 (MAVSALFLMGYGVARFVVEFF), and 230 to 250 (GFILFGWMTKGQILTVPMLLI). Arginine 138 contacts a 1,2-diacyl-sn-glycero-3-phospho-(1'-sn-glycerol).

Belongs to the Lgt family.

It localises to the cell inner membrane. The enzyme catalyses L-cysteinyl-[prolipoprotein] + a 1,2-diacyl-sn-glycero-3-phospho-(1'-sn-glycerol) = an S-1,2-diacyl-sn-glyceryl-L-cysteinyl-[prolipoprotein] + sn-glycerol 1-phosphate + H(+). The protein operates within protein modification; lipoprotein biosynthesis (diacylglyceryl transfer). In terms of biological role, catalyzes the transfer of the diacylglyceryl group from phosphatidylglycerol to the sulfhydryl group of the N-terminal cysteine of a prolipoprotein, the first step in the formation of mature lipoproteins. The sequence is that of Phosphatidylglycerol--prolipoprotein diacylglyceryl transferase from Acinetobacter baylyi (strain ATCC 33305 / BD413 / ADP1).